A 367-amino-acid chain; its full sequence is 4-hydroxyphenylpyruvate dioxygenase (367 aa).

VOC domains lie at 3-135 (GFDH…FVDR) and 166-324 (LIDH…IFTN). Residues His169, His252, and Glu335 each contribute to the Fe cation site.

The protein belongs to the 4HPPD family. Fe cation serves as cofactor.

The catalysed reaction is 3-(4-hydroxyphenyl)pyruvate + O2 = homogentisate + CO2. The protein operates within amino-acid degradation; L-phenylalanine degradation; acetoacetate and fumarate from L-phenylalanine: step 3/6. Its function is as follows. Key enzyme in the degradation of tyrosine. The protein is 4-hydroxyphenylpyruvate dioxygenase (hpd) of Dictyostelium discoideum (Social amoeba).